A 245-amino-acid chain; its full sequence is Spore membrane assembly protein 1 (245 aa).

In terms of biological role, involved in spore and ascus formation. Required for the efficient assembly of the precursors of the prospore membrane to a continuous prospore membrane. This chain is Spore membrane assembly protein 1 (SMA1), found in Saccharomyces cerevisiae (strain ATCC 204508 / S288c) (Baker's yeast).